A 120-amino-acid chain; its full sequence is Thiosulfate sulfurtransferase 16, chloroplastic (120 aa).

The region spanning 20–120 (LLAGHRYLDV…WAKNGLPTKA (101 aa)) is the Rhodanese domain. Catalysis depends on cysteine 80, which acts as the Cysteine persulfide intermediate. Arginine 85 is a substrate binding site.

Monomer.

It is found in the plastid. The protein resides in the chloroplast. It catalyses the reaction thiosulfate + hydrogen cyanide = thiocyanate + sulfite + 2 H(+). Functionally, thought to act during the early stages of leaf senescence. Catalyzes the transfer of a sulfur ion from a donor to cyanide or to other thiol compounds. Substrate preference is thiosulfate &gt; 3-mercaptopyruvate. The polypeptide is Thiosulfate sulfurtransferase 16, chloroplastic (STR16) (Arabidopsis thaliana (Mouse-ear cress)).